A 523-amino-acid chain; its full sequence is Ubiquitin carboxyl-terminal hydrolase 22-A (523 aa).

Residues 4–121 (AGCSHVNSFK…KEEQRKAWKL (118 aa)) form a UBP-type zinc finger. Cysteine 6, histidine 8, cysteine 46, cysteine 49, cysteine 59, cysteine 62, cysteine 67, histidine 72, histidine 76, histidine 82, cysteine 95, and cysteine 98 together coordinate Zn(2+). The 345-residue stretch at 174 to 518 (RGLINLGNTC…EGYLLFYHKQ (345 aa)) folds into the USP domain. The active-site Nucleophile is cysteine 183. Histidine 477 (proton acceptor) is an active-site residue.

It belongs to the peptidase C19 family. UBP8 subfamily. In terms of assembly, component of some SAGA transcription coactivator-HAT complexes.

Its subcellular location is the nucleus. It catalyses the reaction Thiol-dependent hydrolysis of ester, thioester, amide, peptide and isopeptide bonds formed by the C-terminal Gly of ubiquitin (a 76-residue protein attached to proteins as an intracellular targeting signal).. In terms of biological role, histone deubiquitinating component of the transcription regulatory histone acetylation (HAT) complex SAGA. Catalyzes the deubiquitination of both histones H2A and H2B, thereby acting as a coactivator. Recruited to specific gene promoters by activators, where it is required for transcription. The sequence is that of Ubiquitin carboxyl-terminal hydrolase 22-A (usp22-a) from Xenopus laevis (African clawed frog).